The sequence spans 187 residues: Ribosome-recycling factor (187 aa).

It belongs to the RRF family.

The protein resides in the cytoplasm. In terms of biological role, responsible for the release of ribosomes from messenger RNA at the termination of protein biosynthesis. May increase the efficiency of translation by recycling ribosomes from one round of translation to another. In Roseobacter denitrificans (strain ATCC 33942 / OCh 114) (Erythrobacter sp. (strain OCh 114)), this protein is Ribosome-recycling factor.